Here is a 348-residue protein sequence, read N- to C-terminus: UDP-N-acetyl-alpha-D-glucosaminouronate 4-epimerase (348 aa).

Residues phenylalanine 26, isoleucine 27, aspartate 46, threonine 50, glycine 51, aspartate 77, isoleucine 78, glutamine 97, tyrosine 165, lysine 169, and valine 195 each contribute to the NAD(+) site. Tyrosine 165 functions as the Proton acceptor in the catalytic mechanism.

It belongs to the NAD(P)-dependent epimerase/dehydratase family. As to quaternary structure, homodimer. It depends on NAD(+) as a cofactor.

The enzyme catalyses UDP-2-acetamido-2-deoxy-alpha-D-glucuronate = UDP-2-acetamido-2-deoxy-alpha-D-galacturonate. The catalysed reaction is UDP-N-acetyl-alpha-D-glucosamine = UDP-N-acetyl-alpha-D-galactosamine. It functions in the pathway capsule biogenesis; capsule polysaccharide biosynthesis. It participates in glycan metabolism; Vi-antigen biosynthesis. In terms of biological role, epimerase required for the biosynthesis of the capsular polysaccharide, commonly referred as the Vi antigen, an important virulence factor. Catalyzes the reversible epimerization of UDP-N-acetylglucosaminuronic acid (UDP-GlcNAcA) to UDP-N-acetylgalactosaminuronic acid (UDP-GalNAcA). Also catalyzes, with lower efficiency, the reversible epimerization of UDP-N-acetylglucosamine (UDP-GlcNAc) to UDP-N-acetylgalactosamine (UDP-GalNAc). Cannot use UDP-glucose (UDP-Glc) and UDP-galactose (UDP-Gal) as substrates. This is UDP-N-acetyl-alpha-D-glucosaminouronate 4-epimerase from Salmonella typhi.